The sequence spans 393 residues: Phosphoglycerate kinase (393 aa).

Substrate contacts are provided by residues 21–23, R36, 59–62, R113, and R146; these read DLN and HLGR. ATP contacts are provided by residues K197, E319, and 345 to 348; that span reads GGDT.

Belongs to the phosphoglycerate kinase family. As to quaternary structure, monomer.

The protein resides in the cytoplasm. The catalysed reaction is (2R)-3-phosphoglycerate + ATP = (2R)-3-phospho-glyceroyl phosphate + ADP. It participates in carbohydrate degradation; glycolysis; pyruvate from D-glyceraldehyde 3-phosphate: step 2/5. The protein is Phosphoglycerate kinase of Nitratidesulfovibrio vulgaris (strain DSM 19637 / Miyazaki F) (Desulfovibrio vulgaris).